Consider the following 31-residue polypeptide: Kalata-B9 (31 aa).

The cyclopeptide (Gly-Asp) cross-link spans 1-31 (GSVFNCGETCVLGTCYTPGCTCNTYRVCTKD). Disulfide bonds link C6–C20, C10–C22, and C15–C28.

The protein belongs to the cyclotide family. Bracelet subfamily. This peptide occurs in both cyclic and linear forms.

Probably participates in a plant defense mechanism. In Oldenlandia affinis, this protein is Kalata-B9.